A 183-amino-acid polypeptide reads, in one-letter code: uncharacterized protein (183 aa).

4 helical membrane-spanning segments follow: residues 13–35 (KALL…LTYS), 60–82 (LLIL…KLRF), 117–139 (FEPV…YAIF), and 149–171 (LLFY…LYLS).

Its subcellular location is the cell membrane. This is an uncharacterized protein from Archaeoglobus fulgidus (strain ATCC 49558 / DSM 4304 / JCM 9628 / NBRC 100126 / VC-16).